We begin with the raw amino-acid sequence, 490 residues long: Transmembrane protease serine 2 (490 aa).

Residues 1–83 are Cytoplasmic-facing; sequence MALNSGSPPG…ALCTSKSKKS (83 aa). Residues 84–104 traverse the membrane as a helical; Signal-anchor for type II membrane protein segment; sequence LCLALALGTVLTGAAVAAVLL. Residues 105–490 are Extracellular-facing; that stretch reads WRFWDSNCST…WIYQQMRANS (386 aa). Asn111 carries N-linked (GlcNAc...) asparagine glycosylation. The 39-residue stretch at 111 to 149 folds into the LDL-receptor class A domain; it reads NCSTSEMECGSSGTCISSSLWCDGVAHCPNGEDENRCVR. Disulfide bonds link Cys112/Cys125, Cys119/Cys138, Cys132/Cys147, Cys171/Cys230, Cys184/Cys240, Cys243/Cys363, Cys279/Cys295, Cys408/Cys424, and Cys435/Cys463. Positions 133, 135, 143, and 144 each coordinate Ca(2+). An SRCR domain is found at 150–242; the sequence is LYGQSFILQV…RMVVSLRCIE (93 aa). N-linked (GlcNAc...) asparagine glycosylation occurs at Asn212. One can recognise a Peptidase S1 domain in the interval 254 to 487; that stretch reads IVGGLNASPG…FTDWIYQQMR (234 aa). Catalysis depends on charge relay system residues His294 and Asp343. The Charge relay system role is filled by Ser439. A glycan (N-linked (GlcNAc...) asparagine) is linked at Asn474.

Belongs to the peptidase S1 family. The catalytically active form interacts with ACE2. Post-translationally, proteolytically processed; by an autocatalytic mechanism. Autocleavage induces active conformation. As to expression, larynx, trachea and bronchi, lung, prostate and kidney.

It is found in the cell membrane. The protein localises to the secreted. It catalyses the reaction The enzyme cleaves angiotensin-converting enzyme 2 (EC 3.4.17.23) and cleaves influenzea A and B virus and coronavirus spike glycoproteins at arginine residues.. Its function is as follows. Plasma membrane-anchored serine protease that cleaves at arginine residues. Participates in proteolytic cascades of relevance for the normal physiologic function of the prostate. Androgen-induced TMPRSS2 activates several substrates that include pro-hepatocyte growth factor/HGF, the protease activated receptor-2/F2RL1 or matriptase/ST14 leading to extracellular matrix disruption. In addition, activates trigeminal neurons and contribute to both spontaneous pain and mechanical allodynia. In terms of biological role, (Microbial infection) Essential for spread and pathogenesis of influenza A virus (strains H1N1, H3N2 and H7N9) and is involved in proteolytic cleavage and activation of hemagglutinin (HA) protein which is essential for viral infectivity. The polypeptide is Transmembrane protease serine 2 (Tmprss2) (Mus musculus (Mouse)).